Here is a 281-residue protein sequence, read N- to C-terminus: 4-deoxy-L-threo-5-hexosulose-uronate ketol-isomerase (281 aa).

Residues His-198, His-200, Glu-205, and His-248 each contribute to the Zn(2+) site.

This sequence belongs to the KduI family. The cofactor is Zn(2+).

The enzyme catalyses 5-dehydro-4-deoxy-D-glucuronate = 3-deoxy-D-glycero-2,5-hexodiulosonate. It participates in glycan metabolism; pectin degradation; 2-dehydro-3-deoxy-D-gluconate from pectin: step 4/5. Functionally, catalyzes the isomerization of 5-dehydro-4-deoxy-D-glucuronate to 3-deoxy-D-glycero-2,5-hexodiulosonate. The chain is 4-deoxy-L-threo-5-hexosulose-uronate ketol-isomerase from Lacticaseibacillus casei (strain BL23) (Lactobacillus casei).